We begin with the raw amino-acid sequence, 331 residues long: 6-phosphogluconolactonase (331 aa).

Belongs to the cycloisomerase 2 family.

The catalysed reaction is 6-phospho-D-glucono-1,5-lactone + H2O = 6-phospho-D-gluconate + H(+). The protein operates within carbohydrate degradation; pentose phosphate pathway; D-ribulose 5-phosphate from D-glucose 6-phosphate (oxidative stage): step 2/3. Its function is as follows. Catalyzes the hydrolysis of 6-phosphogluconolactone to 6-phosphogluconate. The polypeptide is 6-phosphogluconolactonase (Salmonella agona (strain SL483)).